We begin with the raw amino-acid sequence, 167 residues long: Caffeine dehydrogenase subunit gamma (167 aa).

One can recognise a 2Fe-2S ferredoxin-type domain in the interval 4–80 (HVISLTVNGQ…GHSIRTVEAL (77 aa)). 4 residues coordinate [2Fe-2S] cluster: Cys42, Cys47, Cys50, and Cys62.

In terms of assembly, heterotrimer composed of an alpha (CdhA), a beta (CdhB) and a gamma (CdhC) subunit.

It carries out the reaction caffeine + a ubiquinone + H2O = 1,3,7-trimethylurate + a ubiquinol. The catalysed reaction is ubiquinone-0 + caffeine + H2O = ubiquinol-0 + 1,3,7-trimethylurate. It catalyses the reaction theobromine + a ubiquinone + H2O = 3,7-dimethylurate + a ubiquinol. Component of the caffeine dehydrogenase complex that catalyzes the hydrolytical oxidation of 1,3,7-trimethylxanthine (caffeine) by incorporation of an oxygen atom originating from a water molecule into position C-8 to produce 1,3,7-trimethyluric acid (TMU). Coenzyme Q0 (ubiquinone-0) is the preferred electron acceptor and, to a lesser extent, coenzyme Q2 (ubiquinone-2) can also be used, but oxygen and NAD(P)(+) cannot. Is involved in a caffeine degradation pathway that allows Pseudomonas sp. strain CBB1 to grow on caffeine as the sole carbon and nitrogen source. Is also active with theobromine as substrate, but shows a very poor activity with theophylline and is not active with xanthine, 3-methylxanthine, 7-methylxanthine, TMU, and 3,7-dimethylurate. The sequence is that of Caffeine dehydrogenase subunit gamma from Pseudomonas sp. (strain CBB1).